Reading from the N-terminus, the 377-residue chain is Probable protein phosphatase 2C 61 (377 aa).

A PPM-type phosphatase domain is found at 30–338 (AAGEFSMAAA…DDITAVVVFL (309 aa)). Mn(2+) contacts are provided by Asp64, Gly65, Asp269, and Asp329.

This sequence belongs to the PP2C family. The cofactor is Mg(2+). Mn(2+) serves as cofactor.

It catalyses the reaction O-phospho-L-seryl-[protein] + H2O = L-seryl-[protein] + phosphate. The enzyme catalyses O-phospho-L-threonyl-[protein] + H2O = L-threonyl-[protein] + phosphate. The chain is Probable protein phosphatase 2C 61 from Oryza sativa subsp. japonica (Rice).